Reading from the N-terminus, the 949-residue chain is Translation initiation factor IF-2 (949 aa).

Disordered regions lie at residues phenylalanine 50–arginine 206 and glutamine 220–lysine 359. Composition is skewed to basic and acidic residues over residues glutamate 52–lysine 84 and phenylalanine 104–serine 143. Polar residues-rich tracts occupy residues lysine 144–glutamine 154 and glycine 164–proline 180. The segment covering asparagine 187–arginine 206 has biased composition (low complexity). Over residues tyrosine 224–proline 275 the composition is skewed to basic and acidic residues. Low complexity predominate over residues lysine 319–asparagine 336. Residues glutamate 450–lysine 619 enclose the tr-type G domain. Residues glycine 459 to threonine 466 form a G1 region. GTP is bound at residue glycine 459–threonine 466. Residues glycine 484 to histidine 488 form a G2 region. The segment at aspartate 505 to glycine 508 is G3. Residues aspartate 505–histidine 509 and asparagine 559–aspartate 562 contribute to the GTP site. The segment at asparagine 559 to aspartate 562 is G4. The segment at serine 595–lysine 597 is G5.

This sequence belongs to the TRAFAC class translation factor GTPase superfamily. Classic translation factor GTPase family. IF-2 subfamily.

It localises to the cytoplasm. In terms of biological role, one of the essential components for the initiation of protein synthesis. Protects formylmethionyl-tRNA from spontaneous hydrolysis and promotes its binding to the 30S ribosomal subunits. Also involved in the hydrolysis of GTP during the formation of the 70S ribosomal complex. The polypeptide is Translation initiation factor IF-2 (Streptococcus uberis (strain ATCC BAA-854 / 0140J)).